A 313-amino-acid chain; its full sequence is MGLLIDGVWRDAWYDTKSSGGRFVRKESQYRGGLDAGFRGEPGRYHLYAGFACPWAHRVLIMRALKGLEEMISVSMVNAYMGENGWTFLPGDDVVPDSINGADYLYQVYTAADPTYTGRVTIPILWDKVEKRILNNESSEIIRILNSAFDDVGALPGDYYPAEFRPEIDRINARVYETLNNGVYRSGFATTQEAYEEAFYPLFDTLDWLEEHLTGREWLVGDRLTEADIRLFPTLVRFDAIYHGHFKCNLRRIADYPNLSRLVGKLASHERVAPTINLRHAKAHYYGSHPSVNPTGIVPVGPAQPLPGLTLQS.

Cys-53 functions as the Nucleophile in the catalytic mechanism. Glutathione contacts are provided by residues Trp-86, Arg-119–Ile-122, and Glu-137–Ser-138. The region spanning Pro-161 to Tyr-285 is the GST C-terminal domain. The active-site Proton donor/acceptor is the Tyr-184.

The protein belongs to the GST superfamily. Xi-class GSH transferase family. In terms of assembly, homodimer.

The catalysed reaction is 2-(glutathione-S-yl)-hydroquinone + glutathione = hydroquinone + glutathione disulfide. In terms of biological role, catalyzes glutathione (GSH)-dependent reduction of glutathionyl-hydroquinones (GS-HQs) to the corresponding hydroquinones. Can act on halogenated substrates such as GS-2,6-dichloro-p-hydroquinone (GS-DiCH) and GS-trichloro-p-hydroquinone (GS-TriCH). Involved in the degradation of pentachlorophenol (PCP), a toxic pollutant. The polypeptide is Glutathionyl-hydroquinone reductase PcpF (Sphingobium chlorophenolicum).